The chain runs to 167 residues: MAEEKLTFIPTADLVDIIGSDVRSCDTQFRDLGGVVEFCGKITTVKCFQDNALLKSVLQEDNPGGVLVIDGDASMHTALVGDIIAGLGKDHGWAGVVINGPIRDSKVIGQMEFGCKALGTNPRKSTKTGEGERDVTVSFGGVDFIPGEYIYCDSDGIIVSDEIVQPV.

Residues 81–84 and R103 each bind substrate; that span reads GDII. Residue D104 coordinates a divalent metal cation.

This sequence belongs to the class II aldolase/RraA-like family. In terms of assembly, homotrimer. A divalent metal cation serves as cofactor.

The enzyme catalyses 4-hydroxy-4-methyl-2-oxoglutarate = 2 pyruvate. The catalysed reaction is oxaloacetate + H(+) = pyruvate + CO2. In terms of biological role, catalyzes the aldol cleavage of 4-hydroxy-4-methyl-2-oxoglutarate (HMG) into 2 molecules of pyruvate. Also contains a secondary oxaloacetate (OAA) decarboxylase activity due to the common pyruvate enolate transition state formed following C-C bond cleavage in the retro-aldol and decarboxylation reactions. This is Putative 4-hydroxy-4-methyl-2-oxoglutarate aldolase from Corynebacterium jeikeium (strain K411).